A 208-amino-acid chain; its full sequence is Transmembrane emp24 domain-containing protein p24beta2 (208 aa).

The N-terminal stretch at 1 to 21 is a signal peptide; the sequence is MSLKGTIVLLGLLWSFQATLG. Over 22–176 the chain is Lumenal; the sequence is IRFVIDREEC…ENMSKRAVHK (155 aa). Positions 29–116 constitute a GOLD domain; sequence EECFSHKAEY…HETIDFDVQL (88 aa). A coiled-coil region spans residues 134 to 149; that stretch reads LMEQISKLEEALYNIQ. A glycan (N-linked (GlcNAc...) asparagine) is linked at asparagine 168. The chain crosses the membrane as a helical span at residues 177-195; that stretch reads ALFESFALIGASFLQVYLL. Over 196–208 the chain is Cytoplasmic; that stretch reads RRLFERKLGMSRV. Positions 198-199 match the COPII vesicle coat-binding motif; the sequence is LF. The short motif at 198 to 208 is the COPI vesicle coat-binding element; it reads LFERKLGMSRV. Residues 207–208 carry the Required for the export from the endoplasmic reticulum to the Golgi motif; it reads RV.

The protein belongs to the EMP24/GP25L family. In terms of assembly, probably oligomerizes with other members of the EMP24/GP25L family. Associates with the COPI vesicle coat (coatomer). Associates with the COPII vesicle coat (coatomer). Interacts with p24delta5.

The protein resides in the golgi apparatus. The protein localises to the cis-Golgi network membrane. It localises to the golgi stack membrane. Functionally, involved in vesicular protein trafficking. Mainly functions in the early secretory pathway but also in post-Golgi membranes. Thought to act as cargo receptor at the lumenal side for incorporation of secretory cargo molecules into transport vesicles and to be involved in vesicle coat formation at the cytoplasmic side. Interacts with p24delta5 at endoplasmic reticulum export sites for endoplasmic reticulum exit and coupled transport to the Golgi apparatus. This Arabidopsis thaliana (Mouse-ear cress) protein is Transmembrane emp24 domain-containing protein p24beta2.